Consider the following 507-residue polypeptide: ATP synthase subunit alpha, chloroplastic (507 aa).

ATP is bound at residue G170 to T177.

It belongs to the ATPase alpha/beta chains family. As to quaternary structure, F-type ATPases have 2 components, CF(1) - the catalytic core - and CF(0) - the membrane proton channel. CF(1) has five subunits: alpha(3), beta(3), gamma(1), delta(1), epsilon(1). CF(0) has four main subunits: a, b, b' and c.

The protein resides in the plastid. It localises to the chloroplast thylakoid membrane. The enzyme catalyses ATP + H2O + 4 H(+)(in) = ADP + phosphate + 5 H(+)(out). In terms of biological role, produces ATP from ADP in the presence of a proton gradient across the membrane. The alpha chain is a regulatory subunit. This Dioscorea elephantipes (Elephant's foot yam) protein is ATP synthase subunit alpha, chloroplastic.